Consider the following 117-residue polypeptide: Serine rich endogenous peptide 5 (117 aa).

Residues 1 to 31 (MATKTSNFVSLRVSLFILLLFISSQVAIADA) form the signal peptide. An SCOOP motif motif is present at residues 41–55 (LQIVRRSRSQRGRQY). Over residues 42–51 (QIVRRSRSQR) the composition is skewed to basic residues. The interval 42-117 (QIVRRSRSQR…LPYASSPTST (76 aa)) is disordered. The SxS motif essential for MIK2 binding motif lies at 47-49 (SRS). The span at 60–84 (LRVPPPPPPPLPQMPSAATPPPMPQ) shows a compositional bias: pro residues.

Interacts with MIK2 (via extracellular leucine-rich repeat domain); this interaction triggers the formation of complex between MIK2 and the BAK1/SERK3 and SERK4 coreceptors, and subsequent BAK1 activation by phosphorylation.

Its subcellular location is the cell membrane. The protein localises to the secreted. The protein resides in the extracellular space. It is found in the apoplast. Brassicaceae-specific phytocytokine (plant endogenous peptide released into the apoplast) perceived by MIK2 in a BAK1/SERK3 and SERK4 coreceptors-dependent manner, that modulates various physiological and antimicrobial processes including growth prevention and reactive oxygen species (ROS) response regulation. The polypeptide is Serine rich endogenous peptide 5 (Arabidopsis thaliana (Mouse-ear cress)).